The chain runs to 407 residues: E3 ubiquitin-protein ligase TRIM13 (407 aa).

The RING-type zinc finger occupies 10 to 58 (CPICCSLFDDPRVLPCSHNFCKKCLEGLLEGNVRNSLWRPSPFKCPTCR). A B box-type zinc finger spans residues 89 to 131 (PKMPVCKGHLGQPLNIFCVTDMQLICGICATRGEHTKHVFSSI). Zn(2+)-binding residues include cysteine 94, histidine 97, cysteine 117, and histidine 123. The stretch at 172-200 (LQLLTKDSDKVKEFFEKLQHTLDQKKNEI) forms a coiled coil. The helical transmembrane segment at 316–336 (LLLMMVVLLGLLIFFGPTVFL) threads the bilayer.

It belongs to the TRIM/RBCC family. In terms of assembly, interacts (via C-terminal domain) with VCP. Interacts with AKT1; the interaction ubiquitinates AKT1 and leads to its proteasomal degradation. Interacts with MDM2; the interaction ubiquitinates AKT1 and leads to its proteasomal degradation. Interacts with p62/SQSTM1. Interacts with TRAF6. Interacts with IKBKG/NEMO. In terms of processing, auto-ubiquitinated; requires the RING-type zinc finger. Auto-polyubiquitination leads to proteasomal degradation.

It is found in the endoplasmic reticulum membrane. It carries out the reaction S-ubiquitinyl-[E2 ubiquitin-conjugating enzyme]-L-cysteine + [acceptor protein]-L-lysine = [E2 ubiquitin-conjugating enzyme]-L-cysteine + N(6)-ubiquitinyl-[acceptor protein]-L-lysine.. The protein operates within protein modification; protein ubiquitination. Functionally, endoplasmic reticulum (ER) membrane anchored E3 ligase involved in the retrotranslocation and turnover of membrane and secretory proteins from the ER through a set of processes named ER-associated degradation (ERAD). This process acts on misfolded proteins as well as in the regulated degradation of correctly folded proteins. Enhances ionizing radiation-induced p53/TP53 stability and apoptosis via ubiquitinating MDM2 and AKT1 and decreasing AKT1 kinase activity through MDM2 and AKT1 proteasomal degradation. Regulates ER stress-induced autophagy, and may act as a tumor suppressor. Also plays a role in innate immune response by stimulating NF-kappa-B activity in the TLR2 signaling pathway. Ubiquitinates TRAF6 via the 'Lys-29'-linked polyubiquitination chain resulting in NF-kappa-B activation. Participates as well in T-cell receptor-mediated NF-kappa-B activation. In the presence of TNF, modulates the IKK complex by regulating IKBKG/NEMO ubiquitination leading to the repression of NF-kappa-B. The protein is E3 ubiquitin-protein ligase TRIM13 (Trim13) of Mus musculus (Mouse).